The primary structure comprises 359 residues: Peptide chain release factor 1 (359 aa).

An N5-methylglutamine modification is found at Q236.

This sequence belongs to the prokaryotic/mitochondrial release factor family. Methylated by PrmC. Methylation increases the termination efficiency of RF1.

It localises to the cytoplasm. Its function is as follows. Peptide chain release factor 1 directs the termination of translation in response to the peptide chain termination codons UAG and UAA. This is Peptide chain release factor 1 from Streptococcus pyogenes serotype M18 (strain MGAS8232).